The following is a 28-amino-acid chain: Dermaseptin-6TR (28 aa).

As to expression, expressed by the skin glands.

The protein resides in the secreted. In terms of biological role, has antimicrobial activity. The chain is Dermaseptin-6TR from Phyllomedusa trinitatis (Trinidad leaf frog).